Consider the following 465-residue polypeptide: SET domain-containing protein 3 (465 aa).

Residues 18-265 form the SET domain; that stretch reads DKVTVKWDKK…AREELLDSYG (248 aa).

It belongs to the class V-like SAM-binding methyltransferase superfamily.

The chain is SET domain-containing protein 3 (set-3) from Caenorhabditis elegans.